The sequence spans 576 residues: Small ribosomal subunit protein mS80 (rPPR6) (576 aa).

The transit peptide at 1–76 directs the protein to the mitochondrion; sequence MLRSFLCRSQ…SLPADEIPIS (76 aa). 9 PPR repeats span residues 230–264, 265–299, 300–336, 341–370, 371–405, 406–440, 441–475, 476–510, and 511–546; these read NLEI…GFTP, NAKT…GVLS, EGEQ…SLPP, TLIT…ARRR, GIKP…GPAP, GNAV…GLKP, DVYT…HKKL, SPVT…GVQP, and NADE…GLHL.

This sequence belongs to the PPR family. P subfamily. Component of the mitochondrial ribosome small subunit.

The protein localises to the mitochondrion. The sequence is that of Small ribosomal subunit protein mS80 (rPPR6) from Arabidopsis thaliana (Mouse-ear cress).